A 199-amino-acid chain; its full sequence is Single-stranded DNA-binding protein 2 (199 aa).

The region spanning 1–110 (MAGETVITVV…LDVDEVGASL (110 aa)) is the SSB domain. Positions 114-199 (TAKVTKTSGQ…GGGYSDEPPF (86 aa)) are disordered. The segment covering 123-156 (QGRGGQGGYGGGGGGQGGGGWGGGPGGGQQGGGA) has biased composition (gly residues). Over residues 157–166 (PADDPWATGG) the composition is skewed to low complexity. The segment covering 167 to 193 (APAGGQQGGGGQGGGGWGGGSGGGGGY) has biased composition (gly residues).

As to quaternary structure, homotetramer. In terms of processing, phosphorylated on tyrosine residue(s) when expressed in E.coli.

Its subcellular location is the cytoplasm. The protein localises to the nucleoid. The polypeptide is Single-stranded DNA-binding protein 2 (ssb2) (Streptomyces coelicolor (strain ATCC BAA-471 / A3(2) / M145)).